The sequence spans 67 residues: Large ribosomal subunit protein bL31 (67 aa).

The protein belongs to the bacterial ribosomal protein bL31 family. Type A subfamily. In terms of assembly, part of the 50S ribosomal subunit.

Binds the 23S rRNA. In Leptospira borgpetersenii serovar Hardjo-bovis (strain JB197), this protein is Large ribosomal subunit protein bL31.